The following is a 170-amino-acid chain: NADH-quinone oxidoreductase subunit B (170 aa).

Residues Cys-37, Cys-38, Cys-102, and Cys-131 each coordinate [4Fe-4S] cluster.

It belongs to the complex I 20 kDa subunit family. In terms of assembly, NDH-1 is composed of 14 different subunits. Subunits NuoB, C, D, E, F, and G constitute the peripheral sector of the complex. [4Fe-4S] cluster is required as a cofactor.

It is found in the cell inner membrane. It carries out the reaction a quinone + NADH + 5 H(+)(in) = a quinol + NAD(+) + 4 H(+)(out). NDH-1 shuttles electrons from NADH, via FMN and iron-sulfur (Fe-S) centers, to quinones in the respiratory chain. The immediate electron acceptor for the enzyme in this species is believed to be ubiquinone. Couples the redox reaction to proton translocation (for every two electrons transferred, four hydrogen ions are translocated across the cytoplasmic membrane), and thus conserves the redox energy in a proton gradient. The protein is NADH-quinone oxidoreductase subunit B of Citrifermentans bemidjiense (strain ATCC BAA-1014 / DSM 16622 / JCM 12645 / Bem) (Geobacter bemidjiensis).